The primary structure comprises 51 residues: Large ribosomal subunit protein eL39 (51 aa).

Belongs to the eukaryotic ribosomal protein eL39 family.

The sequence is that of Large ribosomal subunit protein eL39 from Pyrobaculum neutrophilum (strain DSM 2338 / JCM 9278 / NBRC 100436 / V24Sta) (Thermoproteus neutrophilus).